A 361-amino-acid chain; its full sequence is Velvet complex subunit B (361 aa).

Residues M1–R336 form the Velvet domain. 2 disordered regions span residues P42–P222 and G327–S361. Low complexity-rich tracts occupy residues P57–P74 and P93–Q107. A compositionally biased stretch (polar residues) spans D108–T127. Residues Y130–L147 show a composition bias toward pro residues. 3 stretches are compositionally biased toward polar residues: residues S149–D168, G181–G196, and S212–P222. The segment covering L335–N349 has biased composition (basic residues).

It belongs to the velvet family. VelB subfamily. Component of the heterotrimeric velvet complex composed of laeA, veA and velB; VeA acting as a bridging protein between laeA and velB. Forms a heterodimeric complex with vosA; the formation of the velB-vosA complex is light-dependent.

It localises to the nucleus. The protein resides in the cytoplasm. Functionally, component of the velvet transcription factor complex that controls sexual/asexual developmental ratio in response to light, promoting sexual development in the darkness while stimulating asexual sporulation under illumination. The velvet complex acts as a global regulator for secondary metabolite gene expression. Component of the velB-VosA heterodimeric complex that plays a dual role in activating genes associated with spore maturation and repressing certain development-associated genes. The velB-VosA complex binds DNA through the DNA-binding domain of vosA that recognizes an 11-nucleotide consensus sequence 5'-CTGGCCGCGGC-3' consisting of two motifs in the promoters of key developmental regulatory genes. The chain is Velvet complex subunit B from Coprinopsis cinerea (strain Okayama-7 / 130 / ATCC MYA-4618 / FGSC 9003) (Inky cap fungus).